Reading from the N-terminus, the 329-residue chain is Glycerol-3-phosphate dehydrogenase [NAD(P)+] (329 aa).

W11, R30, and K103 together coordinate NADPH. Residues K103, G132, and S134 each contribute to the sn-glycerol 3-phosphate site. A136 is a binding site for NADPH. Sn-glycerol 3-phosphate is bound by residues K187, D240, S250, R251, and N252. Catalysis depends on K187, which acts as the Proton acceptor. R251 provides a ligand contact to NADPH. NADPH contacts are provided by V275 and E277.

The protein belongs to the NAD-dependent glycerol-3-phosphate dehydrogenase family.

The protein localises to the cytoplasm. It carries out the reaction sn-glycerol 3-phosphate + NAD(+) = dihydroxyacetone phosphate + NADH + H(+). The enzyme catalyses sn-glycerol 3-phosphate + NADP(+) = dihydroxyacetone phosphate + NADPH + H(+). The protein operates within membrane lipid metabolism; glycerophospholipid metabolism. Functionally, catalyzes the reduction of the glycolytic intermediate dihydroxyacetone phosphate (DHAP) to sn-glycerol 3-phosphate (G3P), the key precursor for phospholipid synthesis. The sequence is that of Glycerol-3-phosphate dehydrogenase [NAD(P)+] from Dechloromonas aromatica (strain RCB).